Reading from the N-terminus, the 372-residue chain is N-methyl-L-tryptophan oxidase (372 aa).

4-34 is a binding site for FAD; that stretch reads DLIIIGSGSVGAAAGYYATRAGLNVLMTDAH. S-8alpha-FAD cysteine is present on Cys308.

It belongs to the MSOX/MTOX family. MTOX subfamily. In terms of assembly, monomer. It depends on FAD as a cofactor.

It catalyses the reaction N(alpha)-methyl-L-tryptophan + O2 + H2O = L-tryptophan + formaldehyde + H2O2. Functionally, catalyzes the oxidative demethylation of N-methyl-L-tryptophan. In Escherichia coli O7:K1 (strain IAI39 / ExPEC), this protein is N-methyl-L-tryptophan oxidase.